Reading from the N-terminus, the 674-residue chain is DNA ligase (674 aa).

Residues D35–D39, S82–L83, and E116 contribute to the NAD(+) site. The N6-AMP-lysine intermediate role is filled by K118. NAD(+)-binding residues include R139, E174, K282, and K306. Residues C400, C403, C418, and C424 each contribute to the Zn(2+) site. One can recognise a BRCT domain in the interval S593–V674.

It belongs to the NAD-dependent DNA ligase family. LigA subfamily. The cofactor is Mg(2+). Mn(2+) serves as cofactor.

It carries out the reaction NAD(+) + (deoxyribonucleotide)n-3'-hydroxyl + 5'-phospho-(deoxyribonucleotide)m = (deoxyribonucleotide)n+m + AMP + beta-nicotinamide D-nucleotide.. Functionally, DNA ligase that catalyzes the formation of phosphodiester linkages between 5'-phosphoryl and 3'-hydroxyl groups in double-stranded DNA using NAD as a coenzyme and as the energy source for the reaction. It is essential for DNA replication and repair of damaged DNA. In Ehrlichia ruminantium (strain Welgevonden), this protein is DNA ligase.